Consider the following 153-residue polypeptide: Large ribosomal subunit protein uL15 (153 aa).

Residues 1–42 (MRLNTIKPGMGSTKPRRRVGRGIGSGLGKTCGRGHKGQKSRA) form a disordered region. Positions 21–31 (RGIGSGLGKTC) are enriched in gly residues.

Belongs to the universal ribosomal protein uL15 family. As to quaternary structure, part of the 50S ribosomal subunit.

Its function is as follows. Binds to the 23S rRNA. This Nitrosomonas eutropha (strain DSM 101675 / C91 / Nm57) protein is Large ribosomal subunit protein uL15.